Consider the following 252-residue polypeptide: Cell division protein ZapD (252 aa).

The protein belongs to the ZapD family. Interacts with FtsZ.

It localises to the cytoplasm. Functionally, cell division factor that enhances FtsZ-ring assembly. Directly interacts with FtsZ and promotes bundling of FtsZ protofilaments, with a reduction in FtsZ GTPase activity. In Cupriavidus taiwanensis (strain DSM 17343 / BCRC 17206 / CCUG 44338 / CIP 107171 / LMG 19424 / R1) (Ralstonia taiwanensis (strain LMG 19424)), this protein is Cell division protein ZapD.